Reading from the N-terminus, the 70-residue chain is ATP synthase subunit epsilon, mitochondrial (70 aa).

This sequence belongs to the eukaryotic ATPase epsilon family. F-type ATPases have 2 components, CF(1) - the catalytic core - and CF(0) - the membrane proton channel. CF(1) has five subunits: alpha(3), beta(3), gamma(1), delta(1), epsilon(1). CF(0) has three main subunits: a, b and c.

The protein resides in the mitochondrion. Its subcellular location is the mitochondrion inner membrane. Mitochondrial membrane ATP synthase (F(1)F(0) ATP synthase or Complex V) produces ATP from ADP in the presence of a proton gradient across the membrane which is generated by electron transport complexes of the respiratory chain. F-type ATPases consist of two structural domains, F(1) - containing the extramembraneous catalytic core, and F(0) - containing the membrane proton channel, linked together by a central stalk and a peripheral stalk. During catalysis, ATP synthesis in the catalytic domain of F(1) is coupled via a rotary mechanism of the central stalk subunits to proton translocation. Part of the complex F(1) domain and of the central stalk which is part of the complex rotary element. Rotation of the central stalk against the surrounding alpha(3)beta(3) subunits leads to hydrolysis of ATP in three separate catalytic sites on the beta subunits. The chain is ATP synthase subunit epsilon, mitochondrial from Zea mays (Maize).